Consider the following 227-residue polypeptide: Cytochrome c oxidase subunit 2 (227 aa).

Over 1–14 the chain is Mitochondrial intermembrane; it reads MAYPLQLGLQDATS. The helical transmembrane segment at 15–45 threads the bilayer; that stretch reads PIMEELMNFHDHTLMIVFLISSLVLYVISSM. At 46 to 59 the chain is on the mitochondrial matrix side; it reads LTTKLTHTSTMDAQ. Residues 60 to 87 form a helical membrane-spanning segment; that stretch reads EVETIWTILPAVILIMIALPSLRILYMM. Residues 88–227 are Mitochondrial intermembrane-facing; sequence DEINNPVLTV…NFETWSVSMI (140 aa). 6 residues coordinate Cu cation: His161, Cys196, Glu198, Cys200, His204, and Met207. Glu198 provides a ligand contact to Mg(2+).

This sequence belongs to the cytochrome c oxidase subunit 2 family. Component of the cytochrome c oxidase (complex IV, CIV), a multisubunit enzyme composed of 14 subunits. The complex is composed of a catalytic core of 3 subunits MT-CO1, MT-CO2 and MT-CO3, encoded in the mitochondrial DNA, and 11 supernumerary subunits COX4I, COX5A, COX5B, COX6A, COX6B, COX6C, COX7A, COX7B, COX7C, COX8 and NDUFA4, which are encoded in the nuclear genome. The complex exists as a monomer or a dimer and forms supercomplexes (SCs) in the inner mitochondrial membrane with NADH-ubiquinone oxidoreductase (complex I, CI) and ubiquinol-cytochrome c oxidoreductase (cytochrome b-c1 complex, complex III, CIII), resulting in different assemblies (supercomplex SCI(1)III(2)IV(1) and megacomplex MCI(2)III(2)IV(2)). Found in a complex with TMEM177, COA6, COX18, COX20, SCO1 and SCO2. Interacts with TMEM177 in a COX20-dependent manner. Interacts with COX20. Interacts with COX16. Cu cation serves as cofactor.

It is found in the mitochondrion inner membrane. It catalyses the reaction 4 Fe(II)-[cytochrome c] + O2 + 8 H(+)(in) = 4 Fe(III)-[cytochrome c] + 2 H2O + 4 H(+)(out). Component of the cytochrome c oxidase, the last enzyme in the mitochondrial electron transport chain which drives oxidative phosphorylation. The respiratory chain contains 3 multisubunit complexes succinate dehydrogenase (complex II, CII), ubiquinol-cytochrome c oxidoreductase (cytochrome b-c1 complex, complex III, CIII) and cytochrome c oxidase (complex IV, CIV), that cooperate to transfer electrons derived from NADH and succinate to molecular oxygen, creating an electrochemical gradient over the inner membrane that drives transmembrane transport and the ATP synthase. Cytochrome c oxidase is the component of the respiratory chain that catalyzes the reduction of oxygen to water. Electrons originating from reduced cytochrome c in the intermembrane space (IMS) are transferred via the dinuclear copper A center (CU(A)) of subunit 2 and heme A of subunit 1 to the active site in subunit 1, a binuclear center (BNC) formed by heme A3 and copper B (CU(B)). The BNC reduces molecular oxygen to 2 water molecules using 4 electrons from cytochrome c in the IMS and 4 protons from the mitochondrial matrix. The polypeptide is Cytochrome c oxidase subunit 2 (MT-CO2) (Malacothrix typica (Long-eared mouse)).